We begin with the raw amino-acid sequence, 257 residues long: Imidazole glycerol phosphate synthase subunit HisF (257 aa).

Catalysis depends on residues aspartate 12 and aspartate 131.

This sequence belongs to the HisA/HisF family. As to quaternary structure, heterodimer of HisH and HisF.

Its subcellular location is the cytoplasm. It carries out the reaction 5-[(5-phospho-1-deoxy-D-ribulos-1-ylimino)methylamino]-1-(5-phospho-beta-D-ribosyl)imidazole-4-carboxamide + L-glutamine = D-erythro-1-(imidazol-4-yl)glycerol 3-phosphate + 5-amino-1-(5-phospho-beta-D-ribosyl)imidazole-4-carboxamide + L-glutamate + H(+). Its pathway is amino-acid biosynthesis; L-histidine biosynthesis; L-histidine from 5-phospho-alpha-D-ribose 1-diphosphate: step 5/9. Functionally, IGPS catalyzes the conversion of PRFAR and glutamine to IGP, AICAR and glutamate. The HisF subunit catalyzes the cyclization activity that produces IGP and AICAR from PRFAR using the ammonia provided by the HisH subunit. The polypeptide is Imidazole glycerol phosphate synthase subunit HisF (Saccharophagus degradans (strain 2-40 / ATCC 43961 / DSM 17024)).